We begin with the raw amino-acid sequence, 142 residues long: Arginine decarboxylase proenzyme (142 aa).

Ser81 (schiff-base intermediate with substrate; via pyruvic acid) is an active-site residue. Ser81 is subject to Pyruvic acid (Ser); by autocatalysis. His86 functions as the Proton acceptor; for processing activity in the catalytic mechanism. Catalysis depends on Cys101, which acts as the Proton donor; for catalytic activity.

The protein belongs to the prokaryotic AdoMetDC family. Type 1 subfamily. Heterooctamer of four alpha and four beta chains arranged as a tetramer of alpha/beta heterodimers. It depends on pyruvate as a cofactor. Is synthesized initially as an inactive proenzyme. Formation of the active enzyme involves a self-maturation process in which the active site pyruvoyl group is generated from an internal serine residue via an autocatalytic post-translational modification. Two non-identical subunits are generated from the proenzyme in this reaction, and the pyruvate is formed at the N-terminus of the alpha chain, which is derived from the carboxyl end of the proenzyme. The post-translation cleavage follows an unusual pathway, termed non-hydrolytic serinolysis, in which the side chain hydroxyl group of the serine supplies its oxygen atom to form the C-terminus of the beta chain, while the remainder of the serine residue undergoes an oxidative deamination to produce ammonia and the pyruvoyl group blocking the N-terminus of the alpha chain.

The catalysed reaction is L-arginine + H(+) = agmatine + CO2. Its pathway is amine and polyamine biosynthesis; agmatine biosynthesis; agmatine from L-arginine: step 1/1. In terms of biological role, specifically catalyzes the decarboxylation of L-arginine to agmatine. Has no S-adenosylmethionine decarboxylase (AdoMetDC) activity. This is Arginine decarboxylase proenzyme from Hyperthermus butylicus (strain DSM 5456 / JCM 9403 / PLM1-5).